We begin with the raw amino-acid sequence, 696 residues long: Protein OS-9 homolog (696 aa).

Positions 1–15 (MLVVAFASLLGAARA) are cleaved as a signal peptide. 3 N-linked (GlcNAc...) asparagine glycosylation sites follow: asparagine 35, asparagine 46, and asparagine 68. Residues 106–224 (NQCLVSQNGF…QVIVPDLCQL (119 aa)) form the MRH domain. A disulfide bridge connects residues cysteine 108 and cysteine 121. Tryptophan 116, glutamine 128, aspartate 178, arginine 184, glutamate 206, and tyrosine 212 together coordinate a mannooligosaccharide derivative. Disulfide bonds link cysteine 177/cysteine 210 and cysteine 192/cysteine 222. N-linked (GlcNAc...) asparagine glycosylation is found at asparagine 276, asparagine 290, and asparagine 372. Disordered regions lie at residues 450–600 (IEAS…DNSD) and 667–696 (TLGNNDGVASDVKDEEVVESDRNGVIDDEL). The span at 458–467 (TKASESTPVS) shows a compositional bias: polar residues. A compositionally biased stretch (basic and acidic residues) spans 482 to 498 (RSRDKEEYFKENEKQGE). Polar residues-rich tracts occupy residues 499-518 (ENNAQVPFSAHNNEQHGTIS), 528-553 (NQKQLANTQKGDTDTPPQSSQSSAND), and 585-597 (NIDNSSGRSTLND). N-linked (GlcNAc...) asparagine glycosylation occurs at asparagine 588. The span at 685–696 (ESDRNGVIDDEL) shows a compositional bias: basic and acidic residues.

This sequence belongs to the OS-9 family. In terms of assembly, interacts with missfolded ER lumenal proteins.

It localises to the endoplasmic reticulum membrane. Lectin involved in the quality control of the secretory pathway. As a member of the endoplasmic reticulum-associated degradation lumenal (ERAD-L) surveillance system, targets misfolded endoplasmic reticulum lumenal glycoproteins for degradation. The chain is Protein OS-9 homolog (YOS9) from Candida glabrata (strain ATCC 2001 / BCRC 20586 / JCM 3761 / NBRC 0622 / NRRL Y-65 / CBS 138) (Yeast).